We begin with the raw amino-acid sequence, 417 residues long: Gamma-glutamyl phosphate reductase (417 aa).

This sequence belongs to the gamma-glutamyl phosphate reductase family.

The protein localises to the cytoplasm. The catalysed reaction is L-glutamate 5-semialdehyde + phosphate + NADP(+) = L-glutamyl 5-phosphate + NADPH + H(+). Its pathway is amino-acid biosynthesis; L-proline biosynthesis; L-glutamate 5-semialdehyde from L-glutamate: step 2/2. Its function is as follows. Catalyzes the NADPH-dependent reduction of L-glutamate 5-phosphate into L-glutamate 5-semialdehyde and phosphate. The product spontaneously undergoes cyclization to form 1-pyrroline-5-carboxylate. This is Gamma-glutamyl phosphate reductase from Sodalis glossinidius (strain morsitans).